The primary structure comprises 303 residues: Quinolinate synthase (303 aa).

Iminosuccinate contacts are provided by His-25 and Ser-42. Cys-87 provides a ligand contact to [4Fe-4S] cluster. Iminosuccinate is bound by residues 113-115 (YVN) and Ser-130. Residue Cys-173 coordinates [4Fe-4S] cluster. Iminosuccinate contacts are provided by residues 199 to 201 (HPE) and Thr-216. Cys-261 provides a ligand contact to [4Fe-4S] cluster.

This sequence belongs to the quinolinate synthase family. Type 2 subfamily. The cofactor is [4Fe-4S] cluster.

It localises to the cytoplasm. It carries out the reaction iminosuccinate + dihydroxyacetone phosphate = quinolinate + phosphate + 2 H2O + H(+). Its pathway is cofactor biosynthesis; NAD(+) biosynthesis; quinolinate from iminoaspartate: step 1/1. Functionally, catalyzes the condensation of iminoaspartate with dihydroxyacetone phosphate to form quinolinate. This Desulforudis audaxviator (strain MP104C) protein is Quinolinate synthase.